The following is a 146-amino-acid chain: Large ribosomal subunit protein uL15 (146 aa).

The disordered stretch occupies residues 1 to 54 (MTLRLNELAPAEGAKRDNRRLGRGIGSGVGKTGGRGVKGQKSRKSGGVRPGFEG). The segment covering 23 to 37 (RGIGSGVGKTGGRGV) has biased composition (gly residues).

This sequence belongs to the universal ribosomal protein uL15 family. In terms of assembly, part of the 50S ribosomal subunit.

Functionally, binds to the 23S rRNA. This Acinetobacter baylyi (strain ATCC 33305 / BD413 / ADP1) protein is Large ribosomal subunit protein uL15.